The primary structure comprises 185 residues: Putative manganese efflux pump MntP (185 aa).

The next 6 membrane-spanning stretches (helical) occupy residues 4-24, 40-60, 64-84, 108-128, 134-154, and 165-185; these read LFIG…TDAF, IFHI…AGMA, LLSG…LFIL, LLLF…SLGM, FLAV…GLLA, and YSEA…LLPV.

It belongs to the MntP (TC 9.B.29) family.

It is found in the cell membrane. Functionally, probably functions as a manganese efflux pump. The sequence is that of Putative manganese efflux pump MntP from Bacillus velezensis (strain DSM 23117 / BGSC 10A6 / LMG 26770 / FZB42) (Bacillus amyloliquefaciens subsp. plantarum).